The chain runs to 668 residues: CLK4-associating serine/arginine rich protein (668 aa).

Serine 101 is modified (phosphoserine). Disordered regions lie at residues alanine 173–aspartate 232 and alanine 252–histidine 668. Acidic residues predominate over residues proline 182 to asparagine 214. The span at arginine 265–lysine 283 shows a compositional bias: basic residues. Serine 285 and serine 294 each carry phosphoserine. Basic and acidic residues predominate over residues alanine 290–serine 313. Residue threonine 327 is modified to Phosphothreonine. Residues serine 331 and serine 335 each carry the phosphoserine modification. Over residues alanine 340–proline 353 the composition is skewed to low complexity. Residues glycine 354 to proline 365 are compositionally biased toward pro residues. Residues serine 378 to serine 395 show a composition bias toward low complexity. Basic residues predominate over residues serine 396–arginine 435. A compositionally biased stretch (basic and acidic residues) spans histidine 436–arginine 446. Basic residues predominate over residues arginine 475 to serine 486. Composition is skewed to low complexity over residues histidine 487–glutamine 510 and glutamine 518–serine 527. Serine 541 is modified (phosphoserine). Phosphothreonine is present on threonine 567. Residues alanine 579–serine 641 adopt a coiled-coil conformation. Composition is skewed to basic and acidic residues over residues phenylalanine 584 to alanine 611 and lysine 619 to tyrosine 635. Residues serine 636–arginine 645 show a composition bias toward low complexity. A compositionally biased stretch (basic residues) spans serine 653–histidine 668.

This sequence belongs to the splicing factor SR family. In terms of assembly, probably interacts with CLK4. In terms of processing, phosphorylated in vitro by CLK4.

The protein localises to the nucleus. Probably functions as an alternative splicing regulator. May regulate the mRNA splicing of genes such as CLK1. May act by regulating members of the CLK kinase family. The chain is CLK4-associating serine/arginine rich protein (Clasrp) from Rattus norvegicus (Rat).